The sequence spans 205 residues: Beta-crystallin B2 (205 aa).

Residue Ala-2 is modified to N-acetylalanine. Positions 2–16 (ASDHQSPATKQQQPS) are N-terminal arm. 2 consecutive Beta/gamma crystallin 'Greek key' domains span residues 17 to 56 (SKIV…LVHS) and 57 to 101 (GPWV…RPIK). A connecting peptide region spans residues 102–106 (VDSQE). 2 consecutive Beta/gamma crystallin 'Greek key' domains span residues 107–148 (HKIV…RVQS) and 149–191 (GTWV…RRIR). The segment at 193 to 205 (MQWHQRGTFHPTN) is C-terminal arm.

This sequence belongs to the beta/gamma-crystallin family. In terms of assembly, homo/heterodimer, or complexes of higher-order. The structure of beta-crystallin oligomers seems to be stabilized through interactions between the N-terminal arms. Post-translationally, the N-terminus is blocked.

Functionally, crystallins are the dominant structural components of the vertebrate eye lens. The protein is Beta-crystallin B2 of Aquarana catesbeiana (American bullfrog).